A 248-amino-acid chain; its full sequence is Ubiquinone biosynthesis O-methyltransferase (248 aa).

The S-adenosyl-L-methionine site is built by Arg41, Gly72, Asp93, and Met136.

Belongs to the methyltransferase superfamily. UbiG/COQ3 family.

It carries out the reaction a 3-demethylubiquinol + S-adenosyl-L-methionine = a ubiquinol + S-adenosyl-L-homocysteine + H(+). The catalysed reaction is a 3-(all-trans-polyprenyl)benzene-1,2-diol + S-adenosyl-L-methionine = a 2-methoxy-6-(all-trans-polyprenyl)phenol + S-adenosyl-L-homocysteine + H(+). It functions in the pathway cofactor biosynthesis; ubiquinone biosynthesis. Functionally, O-methyltransferase that catalyzes the 2 O-methylation steps in the ubiquinone biosynthetic pathway. The polypeptide is Ubiquinone biosynthesis O-methyltransferase (Sinorhizobium fredii (strain NBRC 101917 / NGR234)).